The following is a 1186-amino-acid chain: ATP-dependent helicase/deoxyribonuclease subunit B (1186 aa).

This sequence belongs to the helicase family. AddB/RexB type 2 subfamily. Heterodimer of AddA and RexB. It depends on Mg(2+) as a cofactor.

Its function is as follows. The heterodimer acts as both an ATP-dependent DNA helicase and an ATP-dependent, dual-direction single-stranded exonuclease. Recognizes the chi site generating a DNA molecule suitable for the initiation of homologous recombination. This subunit has 5' -&gt; 3' nuclease activity but not helicase activity. This Latilactobacillus sakei subsp. sakei (strain 23K) (Lactobacillus sakei subsp. sakei) protein is ATP-dependent helicase/deoxyribonuclease subunit B.